The sequence spans 178 residues: Large ribosomal subunit protein uL6 (178 aa).

This sequence belongs to the universal ribosomal protein uL6 family. Part of the 50S ribosomal subunit.

Its function is as follows. This protein binds to the 23S rRNA, and is important in its secondary structure. It is located near the subunit interface in the base of the L7/L12 stalk, and near the tRNA binding site of the peptidyltransferase center. This is Large ribosomal subunit protein uL6 from Helicobacter pylori (strain G27).